The sequence spans 126 residues: 13 kDa ribonucleoprotein-associated protein (126 aa).

The protein belongs to the eukaryotic ribosomal protein eL8 family. Component of the U3 snoRNP particle. Binds to the C'/D and B/C motifs in U3 snoRNA. Component of the 25S U4/U6.U5 tri-snRNP particle, a subcomplex of the spliceosome. Binds to the 5' stem-loop of U4 snRNA.

Its subcellular location is the nucleus. It localises to the nucleolus. Its function is as follows. Common component of the spliceosome and rRNA processing machinery. In association with the spliceosomal U4/U6.U5 tri-snRNP particle, required for splicing of pre-mRNA. In association with box C/D snoRNPs, required for processing of pre-ribosomal RNA (rRNA) and site-specific 2'-O-methylation of substrate RNAs. Essential for the accumulation and stability of U4 snRNA, U6 snRNA, and box C/D snoRNAs. This is 13 kDa ribonucleoprotein-associated protein (SNU13) from Mycosarcoma maydis (Corn smut fungus).